Consider the following 296-residue polypeptide: Pre-mRNA-splicing factor CWC23 (296 aa).

Positions D14–V86 constitute a J domain.

This sequence belongs to the DnaJ family. In terms of assembly, associated with the spliceosome.

The protein resides in the cytoplasm. It localises to the nucleus. In terms of biological role, involved in pre-mRNA splicing. May be involved in endoplasmic reticulum-associated protein degradation (ERAD) and required for growth at low and high temperatures. The sequence is that of Pre-mRNA-splicing factor CWC23 (CWC23) from Candida glabrata (strain ATCC 2001 / BCRC 20586 / JCM 3761 / NBRC 0622 / NRRL Y-65 / CBS 138) (Yeast).